The primary structure comprises 218 residues: Leucine-rich repeat protein 1 (218 aa).

The N-terminal stretch at 1-27 is a signal peptide; the sequence is MASRNYRWELFAASLTLTLALIHLVEA. LRR repeat units follow at residues 94–117, 119–140, 141–165, and 167–190; these read EHLQ…LGNL, NLIS…SLGK, LKSL…LTAI, and SLKV…PFAH.

In terms of assembly, interacts with HIR1.

In terms of biological role, involved in plant defense response. This Arabidopsis thaliana (Mouse-ear cress) protein is Leucine-rich repeat protein 1.